A 426-amino-acid chain; its full sequence is Serine--tRNA ligase (426 aa).

Thr227 to Glu229 contributes to the L-serine binding site. ATP-binding positions include Arg258 to Glu260 and Val274. Glu281 contributes to the L-serine binding site. Glu345–Ser348 is a binding site for ATP. Thr380 lines the L-serine pocket.

The protein belongs to the class-II aminoacyl-tRNA synthetase family. Type-1 seryl-tRNA synthetase subfamily. As to quaternary structure, homodimer. The tRNA molecule binds across the dimer.

It localises to the cytoplasm. It carries out the reaction tRNA(Ser) + L-serine + ATP = L-seryl-tRNA(Ser) + AMP + diphosphate + H(+). The catalysed reaction is tRNA(Sec) + L-serine + ATP = L-seryl-tRNA(Sec) + AMP + diphosphate + H(+). The protein operates within aminoacyl-tRNA biosynthesis; selenocysteinyl-tRNA(Sec) biosynthesis; L-seryl-tRNA(Sec) from L-serine and tRNA(Sec): step 1/1. In terms of biological role, catalyzes the attachment of serine to tRNA(Ser). Is also able to aminoacylate tRNA(Sec) with serine, to form the misacylated tRNA L-seryl-tRNA(Sec), which will be further converted into selenocysteinyl-tRNA(Sec). The chain is Serine--tRNA ligase from Clavibacter sepedonicus (Clavibacter michiganensis subsp. sepedonicus).